We begin with the raw amino-acid sequence, 502 residues long: ATP synthase subunit alpha (502 aa).

The disordered stretch occupies residues 115-135; it reads VDGLGPINTTNTRPIESPAPG. Residue 169 to 176 participates in ATP binding; it reads GDRQTGKT.

This sequence belongs to the ATPase alpha/beta chains family. F-type ATPases have 2 components, CF(1) - the catalytic core - and CF(0) - the membrane proton channel. CF(1) has five subunits: alpha(3), beta(3), gamma(1), delta(1), epsilon(1). CF(0) has three main subunits: a(1), b(2) and c(9-12). The alpha and beta chains form an alternating ring which encloses part of the gamma chain. CF(1) is attached to CF(0) by a central stalk formed by the gamma and epsilon chains, while a peripheral stalk is formed by the delta and b chains.

It is found in the cell membrane. The enzyme catalyses ATP + H2O + 4 H(+)(in) = ADP + phosphate + 5 H(+)(out). Functionally, produces ATP from ADP in the presence of a proton gradient across the membrane. The alpha chain is a regulatory subunit. The chain is ATP synthase subunit alpha from Bacillus cereus (strain G9842).